A 1169-amino-acid chain; its full sequence is ATP-dependent helicase/deoxyribonuclease subunit B (1169 aa).

The region spanning 1–285 is the UvrD-like helicase ATP-binding domain; the sequence is MEIQFLAGRS…TIFERNHRHL (285 aa). 8 to 15 contacts ATP; that stretch reads GRSGSGKT. The UvrD-like helicase C-terminal domain maps to 280–586; sequence RNHRHLYTPD…KFALIPPSLD (307 aa). [4Fe-4S] cluster contacts are provided by C801, C1121, C1124, and C1130.

The protein belongs to the helicase family. AddB/RexB type 1 subfamily. As to quaternary structure, heterodimer of AddA and AddB. Requires Mg(2+) as cofactor. [4Fe-4S] cluster serves as cofactor.

Functionally, the heterodimer acts as both an ATP-dependent DNA helicase and an ATP-dependent, dual-direction single-stranded exonuclease. Recognizes the chi site generating a DNA molecule suitable for the initiation of homologous recombination. The AddB subunit has 5' -&gt; 3' nuclease activity but not helicase activity. This is ATP-dependent helicase/deoxyribonuclease subunit B from Bacillus pumilus (strain SAFR-032).